A 232-amino-acid chain; its full sequence is MAVISMKQLLEAGVHFGHQTRRWNPKMAEYIFTDRNGIYIIDLQKTAKKLEEAYSFVRELSAQGGTILFVGTKKQAQDAIKEEAERCGMFYVNQRWLGGTLTNFKTIRKRVERLIEIEKMEQEGALSVLPKKEVAKILKEKEKLSRFLSGIKEMKKLPDALFVVDPRKEKIAVAEARKLDIPVVAIVDTNCDPDEVDYVIPGNDDAIRAVKLITSKIADAVIEGRQGEQYAE.

It belongs to the universal ribosomal protein uS2 family.

This is Small ribosomal subunit protein uS2 from Carboxydothermus hydrogenoformans (strain ATCC BAA-161 / DSM 6008 / Z-2901).